The following is a 179-amino-acid chain: Large ribosomal subunit protein uL5 (179 aa).

At K3 the chain carries N6-acetyllysine.

This sequence belongs to the universal ribosomal protein uL5 family. In terms of assembly, part of the 50S ribosomal subunit; part of the 5S rRNA/L5/L18/L25 subcomplex. Contacts the 5S rRNA and the P site tRNA. Forms a bridge to the 30S subunit in the 70S ribosome.

In terms of biological role, this is one of the proteins that bind and probably mediate the attachment of the 5S RNA into the large ribosomal subunit, where it forms part of the central protuberance. In the 70S ribosome it contacts protein S13 of the 30S subunit (bridge B1b), connecting the 2 subunits; this bridge is implicated in subunit movement. Contacts the P site tRNA; the 5S rRNA and some of its associated proteins might help stabilize positioning of ribosome-bound tRNAs. The polypeptide is Large ribosomal subunit protein uL5 (Shigella flexneri).